The sequence spans 170 residues: tRNA-splicing endonuclease (170 aa).

Catalysis depends on residues Tyr-110, His-116, and Lys-147.

Belongs to the tRNA-intron endonuclease family. Archaeal short subfamily. As to quaternary structure, homotetramer; although the tetramer contains four active sites, only two participate in the cleavage. Therefore, it should be considered as a dimer of dimers.

It catalyses the reaction pretRNA = a 3'-half-tRNA molecule with a 5'-OH end + a 5'-half-tRNA molecule with a 2',3'-cyclic phosphate end + an intron with a 2',3'-cyclic phosphate and a 5'-hydroxyl terminus.. In terms of biological role, endonuclease that removes tRNA introns. Cleaves pre-tRNA at the 5'- and 3'-splice sites to release the intron. The products are an intron and two tRNA half-molecules bearing 2',3' cyclic phosphate and 5'-OH termini. Recognizes a pseudosymmetric substrate in which 2 bulged loops of 3 bases are separated by a stem of 4 bp. The protein is tRNA-splicing endonuclease of Pyrococcus horikoshii (strain ATCC 700860 / DSM 12428 / JCM 9974 / NBRC 100139 / OT-3).